A 156-amino-acid polypeptide reads, in one-letter code: Small ribosomal subunit protein uS7 (156 aa).

It belongs to the universal ribosomal protein uS7 family. Part of the 30S ribosomal subunit. Contacts proteins S9 and S11.

One of the primary rRNA binding proteins, it binds directly to 16S rRNA where it nucleates assembly of the head domain of the 30S subunit. Is located at the subunit interface close to the decoding center, probably blocks exit of the E-site tRNA. This is Small ribosomal subunit protein uS7 from Moorella thermoacetica (strain ATCC 39073 / JCM 9320).